A 220-amino-acid polypeptide reads, in one-letter code: MRLVIARCSVDYVGRLTAHLPSAVRLVLVKADGSVSIHADGRAYKPLNWMSPPCVIAEESGVWRVTNKAAEQLVITLEEILHDSSHELGVDPGLRKDGVEAHLQVLLADRPDAIAPGLTLIRREYETGIGPVDLLCRDSDGSTVAVEIKRKGEIDGVEQLTRYLVRLDADPALPHPVRGILAAQSITPQARLLAADRGLGCAVVDYDELRGLEPSIPTLF.

The protein belongs to the NucS endonuclease family.

The protein localises to the cytoplasm. Its function is as follows. Cleaves both 3' and 5' ssDNA extremities of branched DNA structures. In Frankia alni (strain DSM 45986 / CECT 9034 / ACN14a), this protein is Endonuclease NucS.